We begin with the raw amino-acid sequence, 122 residues long: Phospholipase A2 crotoxin basic subunit CBd (122 aa).

Intrachain disulfides connect C26/C115, C28/C44, C43/C95, C49/C122, C50/C88, C57/C81, and C75/C86. 3 residues coordinate Ca(2+): Y27, G29, and G31. The active site involves H47. D48 contributes to the Ca(2+) binding site. The active site involves D89.

This sequence belongs to the phospholipase A2 family. Group II subfamily. D49 sub-subfamily. Heterodimer of one of the acidic (CA1, CA2, CA3 or CA4) and one of the basic (CBa1, CBa2, CBb, CBc or CBd) subunits; non-covalently linked. The acidic subunit is non-toxic, without enzymatic activity and comprises 3 peptides that are cross-linked by 5 disulfide bridges. The basic subunit is toxic, has phospholipase A2 activity and is composed of a single chain. Multiple variants of each subunit give different crotoxin complexes that can be subdivided into 2 classes: (1) those of high toxicity, low PLA2 activity (CBb, CBc and CBd linked with high affinity to any CA) and high stability (K(d)=4.5 nM) and (2) those of moderate toxicity, high PLA2 activity (CBa2 linked with low affinity to any CA) and low stability (K(d)=25 nM). Interacts with crotoxin inhibitor from Crotalus serum (CICS); the interaction leads to dissociation of the CA-CB heterodimer and to inhibition of PLA2 activity of the CB subunit. Interacts with human NBD1 domain of CFTR. The cofactor is Ca(2+). In terms of tissue distribution, expressed by the venom gland.

The protein resides in the secreted. The enzyme catalyses a 1,2-diacyl-sn-glycero-3-phosphocholine + H2O = a 1-acyl-sn-glycero-3-phosphocholine + a fatty acid + H(+). Heterodimer CA-CB: Crotoxin is a potent presynaptic neurotoxin that possesses phospholipase A2 (PLA2) activity and exerts a lethal action by blocking neuromuscular transmission. It consists of a non-covalent association of a basic and weakly toxic PLA2 subunit (CBa2, CBb, CBc, or CBd), with a small acidic, non-enzymatic and non-toxic subunit (CA1, CA2, CA3 or CA4). The complex acts by binding to a specific 48-kDa protein (R48) receptor located on presynaptic membranes, forming a transient ternary complex CA-CB-R48, followed by dissociation of the CA-CB complex and release of the CA subunit. At equilibrium, only the CB subunits remain associated with the specific crotoxin receptor. In addition to neurotoxicity, crotoxin has been found to exert myotoxicity, nephrotoxicity, and cardiovascular toxicity. Moreover, anti-inflammatory, immunomodulatory, anti-tumor and analgesic effects of crotoxin have also been reported. Its function is as follows. Monomer CBd: The basic subunit of crotoxin is a snake venom phospholipase A2 (PLA2) that exhibits weak neurotoxicity (10-fold less than the heterodimer) and very strong anticoagulant effects by binding to factor Xa (F10) and inhibiting the prothrombinase activity. In addition, it shows the same effects described for the heterodimer and binds the nucleotide-binding domain (NBD1) of CFTR chloride channels and increases the channel current. PLA2 catalyzes the calcium-dependent hydrolysis of the 2-acyl groups in 3-sn-phosphoglycerides. The chain is Phospholipase A2 crotoxin basic subunit CBd from Crotalus durissus terrificus (South American rattlesnake).